Here is a 548-residue protein sequence, read N- to C-terminus: Chaperonin GroEL 1 (548 aa).

Residues 30-33 (TLGP), Lys-51, 87-91 (DGTTT), Gly-415, 479-481 (NAA), and Asp-495 each bind ATP.

The protein belongs to the chaperonin (HSP60) family. Forms a cylinder of 14 subunits composed of two heptameric rings stacked back-to-back. Interacts with the co-chaperonin GroES.

The protein resides in the cytoplasm. The enzyme catalyses ATP + H2O + a folded polypeptide = ADP + phosphate + an unfolded polypeptide.. In terms of biological role, together with its co-chaperonin GroES, plays an essential role in assisting protein folding. The GroEL-GroES system forms a nano-cage that allows encapsulation of the non-native substrate proteins and provides a physical environment optimized to promote and accelerate protein folding. This is Chaperonin GroEL 1 from Escherichia coli O1:K1 / APEC.